Reading from the N-terminus, the 431-residue chain is Saglin (431 aa).

Residues Met-1–Gly-39 form the signal peptide. N-linked (GlcNAc...) asparagine glycosylation is present at Asn-95. Residues Leu-120–Ser-169 adopt a coiled-coil conformation.

As to quaternary structure, homodimer; disulfide-linked. (Microbial infection) Interacts with Plasmodium berghei TRAP (via integrin-like A-domain); the interaction probably promotes sporozoite invasion of salivary gland. As to expression, female saliva (at protein level). Female salivary gland (at protein level).

It is found in the secreted. (Microbial infection) Facilitates invasion of mosquito salivary glands by Plasmodium yoelii sporozoites. Its function is as follows. (Microbial infection) Facilitates invasion of mosquito salivary glands by Plasmodium falciparum sporozoites. In terms of biological role, (Microbial infection) Probably facilitates invasion of mosquito salivary glands by Plasmodium berghei sporozoites. This chain is Saglin, found in Anopheles gambiae (African malaria mosquito).